A 439-amino-acid polypeptide reads, in one-letter code: Ribosomal protein uS12 methylthiotransferase RimO (439 aa).

The region spanning 7–119 (KQLCLISLGC…IDIMIAKKQN (113 aa)) is the MTTase N-terminal domain. [4Fe-4S] cluster is bound by residues Cys16, Cys50, Cys82, Cys151, Cys155, and Cys158. The Radical SAM core domain maps to 137 to 365 (TGSSVHAYVK…NKIALKHQNN (229 aa)).

Belongs to the methylthiotransferase family. RimO subfamily. [4Fe-4S] cluster serves as cofactor.

Its subcellular location is the cytoplasm. It carries out the reaction L-aspartate(89)-[ribosomal protein uS12]-hydrogen + (sulfur carrier)-SH + AH2 + 2 S-adenosyl-L-methionine = 3-methylsulfanyl-L-aspartate(89)-[ribosomal protein uS12]-hydrogen + (sulfur carrier)-H + 5'-deoxyadenosine + L-methionine + A + S-adenosyl-L-homocysteine + 2 H(+). Catalyzes the methylthiolation of an aspartic acid residue of ribosomal protein uS12. In Helicobacter pylori (strain Shi470), this protein is Ribosomal protein uS12 methylthiotransferase RimO.